Reading from the N-terminus, the 188-residue chain is Protein GrpE (188 aa).

The segment at 1–24 (MSDENKPGEAAELDAGVAPEAQPE) is disordered.

Belongs to the GrpE family. As to quaternary structure, homodimer.

The protein localises to the cytoplasm. Functionally, participates actively in the response to hyperosmotic and heat shock by preventing the aggregation of stress-denatured proteins, in association with DnaK and GrpE. It is the nucleotide exchange factor for DnaK and may function as a thermosensor. Unfolded proteins bind initially to DnaJ; upon interaction with the DnaJ-bound protein, DnaK hydrolyzes its bound ATP, resulting in the formation of a stable complex. GrpE releases ADP from DnaK; ATP binding to DnaK triggers the release of the substrate protein, thus completing the reaction cycle. Several rounds of ATP-dependent interactions between DnaJ, DnaK and GrpE are required for fully efficient folding. The chain is Protein GrpE from Hyphomonas neptunium (strain ATCC 15444).